A 108-amino-acid polypeptide reads, in one-letter code: MPLTPPPNYTGLYIAAALGVSLAAVVALFTRSTLPIVGDSQHNLPHGGRYRDGTKAIDYFKPTKLNSVEPGNYWYTQPWLLVILLVALICLSGRHAQCCPRCNRVHSA.

The Cytoplasmic segment spans residues 1-8 (MPLTPPPN). Residues 9-29 (YTGLYIAAALGVSLAAVVALF) form a helical membrane-spanning segment. Residues 30–72 (TRSTLPIVGDSQHNLPHGGRYRDGTKAIDYFKPTKLNSVEPGN) lie on the Lumenal side of the membrane. A helical transmembrane segment spans residues 73 to 93 (YWYTQPWLLVILLVALICLSG). Topologically, residues 94-108 (RHAQCCPRCNRVHSA) are cytoplasmic.

It belongs to the Tymovirales TGBp2 protein family.

The protein resides in the host endoplasmic reticulum membrane. In terms of biological role, plays a role in viral cell-to-cell propagation, by facilitating genome transport to neighboring plant cells through plasmosdesmata,. The sequence is that of Movement protein TGB2 from Solanum tuberosum (Potato).